The primary structure comprises 152 residues: 3-dehydroquinate dehydratase (152 aa).

Residue Y22 is the Proton acceptor of the active site. Residues N73, H79, and D86 each contribute to the substrate site. H99 functions as the Proton donor in the catalytic mechanism. Residues 100–101 and R110 contribute to the substrate site; that span reads LS.

Belongs to the type-II 3-dehydroquinase family. Homododecamer.

The catalysed reaction is 3-dehydroquinate = 3-dehydroshikimate + H2O. The protein operates within metabolic intermediate biosynthesis; chorismate biosynthesis; chorismate from D-erythrose 4-phosphate and phosphoenolpyruvate: step 3/7. In terms of biological role, catalyzes a trans-dehydration via an enolate intermediate. The sequence is that of 3-dehydroquinate dehydratase from Gemmatimonas aurantiaca (strain DSM 14586 / JCM 11422 / NBRC 100505 / T-27).